A 60-amino-acid polypeptide reads, in one-letter code: Putative mercuric resistance protein (60 aa).

In Shigella flexneri, this protein is Putative mercuric resistance protein.